A 74-amino-acid polypeptide reads, in one-letter code: Large ribosomal subunit protein bL31 (74 aa).

4 residues coordinate Zn(2+): Cys-16, Cys-18, Cys-38, and Cys-41.

This sequence belongs to the bacterial ribosomal protein bL31 family. Type A subfamily. As to quaternary structure, part of the 50S ribosomal subunit. Zn(2+) is required as a cofactor.

In terms of biological role, binds the 23S rRNA. The polypeptide is Large ribosomal subunit protein bL31 (Acinetobacter baylyi (strain ATCC 33305 / BD413 / ADP1)).